Reading from the N-terminus, the 396-residue chain is Tryptophan synthase beta chain (396 aa).

K86 is subject to N6-(pyridoxal phosphate)lysine.

Belongs to the TrpB family. As to quaternary structure, tetramer of two alpha and two beta chains. Pyridoxal 5'-phosphate is required as a cofactor.

It carries out the reaction (1S,2R)-1-C-(indol-3-yl)glycerol 3-phosphate + L-serine = D-glyceraldehyde 3-phosphate + L-tryptophan + H2O. Its pathway is amino-acid biosynthesis; L-tryptophan biosynthesis; L-tryptophan from chorismate: step 5/5. In terms of biological role, the beta subunit is responsible for the synthesis of L-tryptophan from indole and L-serine. The protein is Tryptophan synthase beta chain of Aliivibrio fischeri (strain ATCC 700601 / ES114) (Vibrio fischeri).